We begin with the raw amino-acid sequence, 173 residues long: Co-chaperone protein HscB homolog (173 aa).

Residues 5–77 (CHFALFDLQP…SQRARYLLAL (73 aa)) enclose the J domain.

Belongs to the HscB family. In terms of assembly, interacts with HscA and stimulates its ATPase activity.

In terms of biological role, co-chaperone involved in the maturation of iron-sulfur cluster-containing proteins. Seems to help targeting proteins to be folded toward HscA. This is Co-chaperone protein HscB homolog from Ectopseudomonas mendocina (strain ymp) (Pseudomonas mendocina).